Here is a 147-residue protein sequence, read N- to C-terminus: Hemoglobin subunit epsilon (147 aa).

The Globin domain maps to 3 to 147 (HFTAEEKAAI…VAIALGHKYH (145 aa)). Phosphoserine occurs at positions 14 and 51. Residues histidine 64 and histidine 93 each contribute to the heme b site.

Belongs to the globin family. As to quaternary structure, heterotetramer of two alpha chains and two epsilon chains in early embryonic hemoglobin Gower-2; two zeta chains and two epsilon chains in early embryonic hemoglobin Gower-1. As to expression, red blood cells.

The epsilon chain is a beta-type chain of early mammalian embryonic hemoglobin. This chain is Hemoglobin subunit epsilon (HBE1), found in Callithrix jacchus (White-tufted-ear marmoset).